A 101-amino-acid chain; its full sequence is Large ribosomal subunit protein uL23 (101 aa).

It belongs to the universal ribosomal protein uL23 family. Part of the 50S ribosomal subunit. Contacts protein L29, and trigger factor when it is bound to the ribosome.

Functionally, one of the early assembly proteins it binds 23S rRNA. One of the proteins that surrounds the polypeptide exit tunnel on the outside of the ribosome. Forms the main docking site for trigger factor binding to the ribosome. In Azoarcus sp. (strain BH72), this protein is Large ribosomal subunit protein uL23.